A 469-amino-acid chain; its full sequence is Threonine synthase (469 aa).

Lysine 112 is modified (N6-(pyridoxal phosphate)lysine).

The protein belongs to the threonine synthase family. It depends on pyridoxal 5'-phosphate as a cofactor.

It carries out the reaction O-phospho-L-homoserine + H2O = L-threonine + phosphate. The protein operates within amino-acid biosynthesis; L-threonine biosynthesis; L-threonine from L-aspartate: step 5/5. Functionally, catalyzes the gamma-elimination of phosphate from L-phosphohomoserine and the beta-addition of water to produce L-threonine. This chain is Threonine synthase (thrC), found in Pseudomonas aeruginosa (strain ATCC 15692 / DSM 22644 / CIP 104116 / JCM 14847 / LMG 12228 / 1C / PRS 101 / PAO1).